A 336-amino-acid polypeptide reads, in one-letter code: Delta(1)-pyrroline-2-carboxylate reductase (336 aa).

The active-site Charge relay system is serine 47. The active-site Proton donor is histidine 48. Arginine 52 lines the substrate pocket. 120 to 124 (HFSAL) is a binding site for NADP(+). Threonine 160 is a substrate binding site. 178–180 (DFA) lines the NADP(+) pocket. 186 to 187 (RG) contributes to the substrate binding site. The active-site Charge relay system is aspartate 188. Residues 229-230 (HK) and 304-310 (RLPSQRR) contribute to the NADP(+) site.

It belongs to the LDH2/MDH2 oxidoreductase family. In terms of assembly, homodimer.

The catalysed reaction is L-proline + NAD(+) = 1-pyrroline-2-carboxylate + NADH + H(+). It carries out the reaction L-proline + NADP(+) = 1-pyrroline-2-carboxylate + NADPH + H(+). Functionally, catalyzes the reduction of Delta(1)-pyrroline-2-carboxylate (Pyr2C) to L-proline, using NADPH as the electron donor. May be involved in a degradation pathway that converts trans-3-hydroxy-L-proline (t3LHyp) to L-proline. This is Delta(1)-pyrroline-2-carboxylate reductase from Pseudomonas fluorescens (strain ATCC BAA-477 / NRRL B-23932 / Pf-5).